The following is a 319-amino-acid chain: Cytochrome f (319 aa).

The first 35 residues, 1–35 (MFQQMQKISLKLLKTTFLFLFATFILVGLPSTSQA), serve as a signal peptide directing secretion. Heme is bound by residues Tyr-36, Cys-56, Cys-59, and His-60. Residues 285 to 305 (IQGLIAFFISVIIAQTFLVLK) form a helical membrane-spanning segment.

It belongs to the cytochrome f family. In terms of assembly, the 4 large subunits of the cytochrome b6-f complex are cytochrome b6, subunit IV (17 kDa polypeptide, petD), cytochrome f and the Rieske protein, while the 4 small subunits are PetG, PetL, PetM and PetN. The complex functions as a dimer. Heme serves as cofactor.

Its subcellular location is the plastid. The protein resides in the chloroplast thylakoid membrane. Component of the cytochrome b6-f complex, which mediates electron transfer between photosystem II (PSII) and photosystem I (PSI), cyclic electron flow around PSI, and state transitions. This chain is Cytochrome f, found in Chlorokybus atmophyticus (Soil alga).